Reading from the N-terminus, the 345-residue chain is Cysteinyl leukotriene receptor 2 (345 aa).

Residues 1 to 43 (MERKLMSLLPSISLSEMEPNSTLGNHNSNRSCTTENFKREFYP) lie on the Extracellular side of the membrane. Residues Asn20 and Asn29 are each glycosylated (N-linked (GlcNAc...) asparagine). The helical transmembrane segment at 44–64 (IVYLVIFIWGALGNGFSIYVF) threads the bilayer. At 65 to 73 (LKPYKKSTS) the chain is on the cytoplasmic side. The chain crosses the membrane as a helical span at residues 74 to 94 (VNVFMLNLAISDLLFTITLPF). Over 95–124 (RVDYYLRGSNXIFGDTPCRIMSYSMYVNMY) the chain is Extracellular. Cys112 and Cys188 are disulfide-bonded. The chain crosses the membrane as a helical span at residues 125–145 (SSIYFLTVLSVVRFLATVHPF). The Cytoplasmic segment spans residues 146–154 (RLLHTTSIK). Residues 155 to 175 (NAWILCGVIWIFIMASSTVLL) form a helical membrane-spanning segment. Residues 176-205 (KNGSEQKDNVTLCLELNSNKVTKLKTMNYV) lie on the Extracellular side of the membrane. 2 N-linked (GlcNAc...) asparagine glycosylation sites follow: Asn177 and Asn184. A helical transmembrane segment spans residues 206–226 (ALVVGFVLPFGTLSICYLLII). Residues 227-246 (RALLKVEVPESGLRLSHRKA) lie on the Cytoplasmic side of the membrane. A helical membrane pass occupies residues 247–267 (LITVIIALIIFLLCFLPYHVL). Residues 268–287 (RTLHLLEWKADKCKDRLHKA) are Extracellular-facing. The helical transmembrane segment at 288–308 (VAVTLALAAANSCFNPFLYYF) threads the bilayer. The Cytoplasmic segment spans residues 309 to 345 (AGENFKDRLKSALRKGRPQKTRCGFSVCVWLKKETRV).

This sequence belongs to the G-protein coupled receptor 1 family.

The protein resides in the cell membrane. Its function is as follows. Receptor for cysteinyl leukotrienes. The response is mediated via a G-protein that activates a phosphatidylinositol-calcium second messenger system. This is Cysteinyl leukotriene receptor 2 (CYSLTR2) from Sus scrofa (Pig).